The primary structure comprises 79 residues: Acyl carrier protein (79 aa).

The Carrier domain occupies 2-77; that stretch reads DNIEQRVKKI…LAIDFAKSKA (76 aa). S37 is subject to O-(pantetheine 4'-phosphoryl)serine.

Belongs to the acyl carrier protein (ACP) family. 4'-phosphopantetheine is transferred from CoA to a specific serine of apo-ACP by AcpS. This modification is essential for activity because fatty acids are bound in thioester linkage to the sulfhydryl of the prosthetic group.

It is found in the cytoplasm. It participates in lipid metabolism; fatty acid biosynthesis. Functionally, carrier of the growing fatty acid chain in fatty acid biosynthesis. This Polynucleobacter necessarius subsp. necessarius (strain STIR1) protein is Acyl carrier protein.